Here is a 369-residue protein sequence, read N- to C-terminus: IST1-like protein (369 aa).

Positions 12–59 (KLKVQLKLAVSRIQILKNKKANIVRDEKRNVAELLRKKNEESARIRVE) form a coiled coil. Positions 224-354 (QIIQQQQQPQ…SSDTGYPDYD (131 aa)) are disordered. Low complexity-rich tracts occupy residues 225–239 (IIQQ…SFPI) and 246–270 (PTFS…SPQF). The span at 277 to 305 (FYNNNSGNQTPQFPTISTNNSDGYSNDKF) shows a compositional bias: polar residues. Residues 306–337 (NNGNNNYNNNNNNNNNNNNNNNHNNNNNNNNN) are compositionally biased toward low complexity.

The protein belongs to the IST1 family.

This chain is IST1-like protein, found in Dictyostelium discoideum (Social amoeba).